The primary structure comprises 358 residues: Protein FAM50 homolog (358 aa).

Over residues 104–113 the composition is skewed to basic and acidic residues; sequence AKLAEKDRQK. Residues 104-151 are disordered; that stretch reads AKLAEKDRQKRQIQALSFDPDDEPDGDDANDGDEGSGKESEKEDVKEE. Residues 122–137 show a composition bias toward acidic residues; it reads DPDDEPDGDDANDGDE. Over residues 138-151 the composition is skewed to basic and acidic residues; the sequence is GSGKESEKEDVKEE.

Belongs to the FAM50 family.

This chain is Protein FAM50 homolog, found in Anopheles gambiae (African malaria mosquito).